The chain runs to 237 residues: tRNA1(Val) (adenine(37)-N6)-methyltransferase (237 aa).

Belongs to the methyltransferase superfamily. tRNA (adenine-N(6)-)-methyltransferase family.

The protein localises to the cytoplasm. The catalysed reaction is adenosine(37) in tRNA1(Val) + S-adenosyl-L-methionine = N(6)-methyladenosine(37) in tRNA1(Val) + S-adenosyl-L-homocysteine + H(+). In terms of biological role, specifically methylates the adenine in position 37 of tRNA(1)(Val) (anticodon cmo5UAC). This is tRNA1(Val) (adenine(37)-N6)-methyltransferase from Bacteroides thetaiotaomicron (strain ATCC 29148 / DSM 2079 / JCM 5827 / CCUG 10774 / NCTC 10582 / VPI-5482 / E50).